Consider the following 128-residue polypeptide: Large ribosomal subunit protein uL24 (128 aa).

Belongs to the universal ribosomal protein uL24 family. As to quaternary structure, part of the 50S ribosomal subunit.

In terms of biological role, one of two assembly initiator proteins, it binds directly to the 5'-end of the 23S rRNA, where it nucleates assembly of the 50S subunit. Functionally, located at the polypeptide exit tunnel on the outside of the subunit. This chain is Large ribosomal subunit protein uL24, found in Pyrobaculum calidifontis (strain DSM 21063 / JCM 11548 / VA1).